Consider the following 447-residue polypeptide: Serine/threonine-protein phosphatase 2A 55 kDa regulatory subunit B delta isoform (447 aa).

WD repeat units lie at residues 26–65 (AEADIISTVEFNCSGDLLATGDKGGRVVIFQREQENKSRP), 91–132 (EIEE…KRVE), 175–213 (AHTYHINSISVNSDHETYLSADDLRINLWHLEITDRSFN), 224–264 (ELTE…LCDR), 283–321 (EIISSISDVKFSNSGRYMMTRDYLSVKVWDLNMESRPVE), 338–379 (ENDC…DITL), and 414–447 (DFNKKILHTAWHPTDNIIAVAATNNLYIFQDKVN).

This sequence belongs to the phosphatase 2A regulatory subunit B family. As to quaternary structure, PP2A consists of a common heterodimeric core enzyme, composed of a 36 kDa catalytic subunit (subunit C) and a 65 kDa constant regulatory subunit (PR65 or subunit A), that associates with a variety of regulatory subunits. Proteins that associate with the core dimer include three families of regulatory subunits B (the R2/B/PR55/B55, R3/B''/PR72/PR130/PR59 and R5/B'/B56 families), the 48 kDa variable regulatory subunit, viral proteins, and cell signaling molecules. Interacts with ensa (when phosphorylated at 'Ser-67') and arpp19 (when phosphorylated at 'Ser-67'), leading to inhibit PP2A activity.

It localises to the cytoplasm. Functionally, substrate-recognition subunit of protein phosphatase 2A (PP2A) that plays a key role in cell cycle by controlling mitosis entry and exit. The activity of PP2A complexes containing ppp2r2d (PR55-delta) fluctuate during the cell cycle: the activity is high in interphase and low in mitosis. During mitosis, activity of PP2A is inhibited via interaction with phosphorylated ensa and arpp19 inhibitors. PP2A complexes containing ppp2r2d (PR55-delta) also regulate the activity of TGF-beta/Activin/Nodal signaling by restricting receptor activity. Within the PP2A complexes, the B regulatory subunits modulate substrate selectivity and catalytic activity, and may also direct the localization of the catalytic enzyme to a particular subcellular compartment. This Xenopus tropicalis (Western clawed frog) protein is Serine/threonine-protein phosphatase 2A 55 kDa regulatory subunit B delta isoform (ppp2r2d).